The chain runs to 344 residues: Eukaryotic translation initiation factor 3 subunit H (344 aa).

The segment at 1–24 (MATRKESTSTPTAPMASTSPGATL) is disordered. The span at 8–23 (TSTPTAPMASTSPGAT) shows a compositional bias: low complexity. An MPN domain is found at 31 to 165 (IQIEGLVVLK…LKAYRLTPKL (135 aa)). The tract at residues 256 to 305 (SRNLSKQQQQKHQYTQRRQQENAQRQTRGETPLPEEDVSKMFKPPQPPPR) is disordered. A compositionally biased stretch (low complexity) spans 261–272 (KQQQQKHQYTQR).

It belongs to the eIF-3 subunit H family. As to quaternary structure, component of the eukaryotic translation initiation factor 3 (eIF-3) complex, which is composed of 13 subunits: eif3a, eif3b, eif3c, eif3d, eif3e, eif3f, eif3g, eif3h, eif3i, eif3j, eif3k, eif3l and eif3m.

It is found in the cytoplasm. Component of the eukaryotic translation initiation factor 3 (eIF-3) complex, which is involved in protein synthesis of a specialized repertoire of mRNAs and, together with other initiation factors, stimulates binding of mRNA and methionyl-tRNAi to the 40S ribosome. The eIF-3 complex specifically targets and initiates translation of a subset of mRNAs involved in cell proliferation. The sequence is that of Eukaryotic translation initiation factor 3 subunit H (eif3h) from Salmo salar (Atlantic salmon).